Reading from the N-terminus, the 716-residue chain is Phosphoribosylformylglycinamidine synthase subunit PurL (716 aa).

H33 is an active-site residue. Residue Y36 coordinates ATP. Residue E77 coordinates Mg(2+). Residues S78 to H81 and R100 contribute to the substrate site. H79 acts as the Proton acceptor in catalysis. Position 101 (D101) interacts with Mg(2+). Q225 contacts substrate. D253 provides a ligand contact to Mg(2+). Substrate is bound at residue E297–Q299. ATP is bound by residues N475 and G512. N513 is a binding site for Mg(2+). S515 lines the substrate pocket.

This sequence belongs to the FGAMS family. In terms of assembly, monomer. Part of the FGAM synthase complex composed of 1 PurL, 1 PurQ and 2 PurS subunits.

It localises to the cytoplasm. It carries out the reaction N(2)-formyl-N(1)-(5-phospho-beta-D-ribosyl)glycinamide + L-glutamine + ATP + H2O = 2-formamido-N(1)-(5-O-phospho-beta-D-ribosyl)acetamidine + L-glutamate + ADP + phosphate + H(+). The protein operates within purine metabolism; IMP biosynthesis via de novo pathway; 5-amino-1-(5-phospho-D-ribosyl)imidazole from N(2)-formyl-N(1)-(5-phospho-D-ribosyl)glycinamide: step 1/2. Part of the phosphoribosylformylglycinamidine synthase complex involved in the purines biosynthetic pathway. Catalyzes the ATP-dependent conversion of formylglycinamide ribonucleotide (FGAR) and glutamine to yield formylglycinamidine ribonucleotide (FGAM) and glutamate. The FGAM synthase complex is composed of three subunits. PurQ produces an ammonia molecule by converting glutamine to glutamate. PurL transfers the ammonia molecule to FGAR to form FGAM in an ATP-dependent manner. PurS interacts with PurQ and PurL and is thought to assist in the transfer of the ammonia molecule from PurQ to PurL. This is Phosphoribosylformylglycinamidine synthase subunit PurL from Methanosarcina mazei (strain ATCC BAA-159 / DSM 3647 / Goe1 / Go1 / JCM 11833 / OCM 88) (Methanosarcina frisia).